The chain runs to 776 residues: Intermediate filament protein ifp-1 (776 aa).

The head stretch occupies residues Met1–Asp23. An IF rod domain is found at Glu20 to Arg371. Residues Leu24–Leu55 form a coil 1A region. Positions Lys56–Ile69 are linker 1. A coil 1B region spans residues Tyr70 to Glu207. The segment at His208–Asp224 is linker 12. The segment at Gln225 to His620 is coil 2. Disordered regions lie at residues Ala453–Ser473 and Asn518–Arg544. Positions Asn518–Asn536 are enriched in polar residues. Residues Ala621 to Ile768 are tail. One can recognise an LTD domain in the interval Asn653–Ser764.

Belongs to the intermediate filament family.

It is found in the cytoplasm. Functionally, cytoplasmic intermediate filaments provide mechanical strength to cells. Not essential protein. This Caenorhabditis elegans protein is Intermediate filament protein ifp-1 (ifp-1).